Here is a 362-residue protein sequence, read N- to C-terminus: Heat-inducible transcription repressor HrcA (362 aa).

Belongs to the HrcA family.

In terms of biological role, negative regulator of class I heat shock genes (grpE-dnaK-dnaJ and groELS operons). Prevents heat-shock induction of these operons. The chain is Heat-inducible transcription repressor HrcA from Rhizobium johnstonii (strain DSM 114642 / LMG 32736 / 3841) (Rhizobium leguminosarum bv. viciae).